Consider the following 137-residue polypeptide: Probable glycine cleavage system H protein 1 (137 aa).

One can recognise a Lipoyl-binding domain in the interval 31–113 (VAVIGITDYA…YGEGWIFKLK (83 aa)). Lys-72 is modified (N6-lipoyllysine).

It belongs to the GcvH family. The glycine cleavage system is composed of four proteins: P, T, L and H. Requires (R)-lipoate as cofactor.

Functionally, the glycine cleavage system catalyzes the degradation of glycine. The H protein shuttles the methylamine group of glycine from the P protein to the T protein. This Saccharolobus solfataricus (strain ATCC 35092 / DSM 1617 / JCM 11322 / P2) (Sulfolobus solfataricus) protein is Probable glycine cleavage system H protein 1.